Here is a 336-residue protein sequence, read N- to C-terminus: MPTDNDLKAAILELLRDLDVLLVAHFYQKDEIVELAHYTGDSLELAKIASQSDKNLIVFCGVHFMGESVKALAFDKQVIMPKLSCCSMARMIDSHYYDRSVHLLKECGVKEFYPITYINSNAEVKAKVAKDDGVVCTSRNASKIFNHALKQNKKIFFLPDKCLGENLALENGLKSAILGANSQEEIKNADVVCYNGFCSVHQLFKLEDIEFYRQKYPDILIAVHPECEPSVVSNADFSGSTSQIIEFVEKLSPNQKVAIGTESHLVNRLKAKRHHQNTFILSSTLALCPTMNETTLKDLFEVLKAYKNHRAYNTIELKDEVARLAKLALTKMMELS.

Iminosuccinate-binding residues include His25 and Ser42. Cys86 contacts [4Fe-4S] cluster. Residues 117–119 (YIN) and Ser138 contribute to the iminosuccinate site. Position 198 (Cys198) interacts with [4Fe-4S] cluster. Iminosuccinate-binding positions include 224–226 (HPE) and Thr241. Residue Cys288 participates in [4Fe-4S] cluster binding.

The protein belongs to the quinolinate synthase family. Type 3 subfamily. It depends on [4Fe-4S] cluster as a cofactor.

It localises to the cytoplasm. The enzyme catalyses iminosuccinate + dihydroxyacetone phosphate = quinolinate + phosphate + 2 H2O + H(+). The protein operates within cofactor biosynthesis; NAD(+) biosynthesis; quinolinate from iminoaspartate: step 1/1. Its function is as follows. Catalyzes the condensation of iminoaspartate with dihydroxyacetone phosphate to form quinolinate. The chain is Quinolinate synthase from Helicobacter pylori (strain ATCC 700392 / 26695) (Campylobacter pylori).